The chain runs to 177 residues: Co-chaperone protein HscB homolog (177 aa).

The region spanning Asp8–Leu80 is the J domain.

Belongs to the HscB family. Interacts with HscA and stimulates its ATPase activity.

Co-chaperone involved in the maturation of iron-sulfur cluster-containing proteins. Seems to help targeting proteins to be folded toward HscA. The chain is Co-chaperone protein HscB homolog from Azoarcus sp. (strain BH72).